A 249-amino-acid polypeptide reads, in one-letter code: Acetylglutamate kinase (249 aa).

Substrate is bound by residues 38-39, Arg60, and Asn147; that span reads GG.

Belongs to the acetylglutamate kinase family. ArgB subfamily.

The protein localises to the cytoplasm. The catalysed reaction is N-acetyl-L-glutamate + ATP = N-acetyl-L-glutamyl 5-phosphate + ADP. It participates in amino-acid biosynthesis; L-arginine biosynthesis; N(2)-acetyl-L-ornithine from L-glutamate: step 2/4. Its function is as follows. Catalyzes the ATP-dependent phosphorylation of N-acetyl-L-glutamate. The protein is Acetylglutamate kinase of Deinococcus geothermalis (strain DSM 11300 / CIP 105573 / AG-3a).